A 343-amino-acid polypeptide reads, in one-letter code: S-adenosylmethionine:tRNA ribosyltransferase-isomerase (343 aa).

This sequence belongs to the QueA family. Monomer.

Its subcellular location is the cytoplasm. The catalysed reaction is 7-aminomethyl-7-carbaguanosine(34) in tRNA + S-adenosyl-L-methionine = epoxyqueuosine(34) in tRNA + adenine + L-methionine + 2 H(+). It participates in tRNA modification; tRNA-queuosine biosynthesis. Functionally, transfers and isomerizes the ribose moiety from AdoMet to the 7-aminomethyl group of 7-deazaguanine (preQ1-tRNA) to give epoxyqueuosine (oQ-tRNA). This Geobacter sulfurreducens (strain ATCC 51573 / DSM 12127 / PCA) protein is S-adenosylmethionine:tRNA ribosyltransferase-isomerase.